We begin with the raw amino-acid sequence, 196 residues long: Molybdenum cofactor guanylyltransferase (196 aa).

GTP contacts are provided by residues 10–12, Lys-23, Asn-51, Asp-69, and Asp-99; that span reads LAG. Residue Asp-99 participates in Mg(2+) binding.

The protein belongs to the MobA family. As to quaternary structure, monomer. Mg(2+) is required as a cofactor.

It is found in the cytoplasm. The catalysed reaction is Mo-molybdopterin + GTP + H(+) = Mo-molybdopterin guanine dinucleotide + diphosphate. In terms of biological role, transfers a GMP moiety from GTP to Mo-molybdopterin (Mo-MPT) cofactor (Moco or molybdenum cofactor) to form Mo-molybdopterin guanine dinucleotide (Mo-MGD) cofactor. The protein is Molybdenum cofactor guanylyltransferase of Shewanella loihica (strain ATCC BAA-1088 / PV-4).